We begin with the raw amino-acid sequence, 1838 residues long: Type III effector DspE (1838 aa).

Basic and acidic residues predominate over residues 1 to 12 (MELKSLGTEHKA). 6 disordered regions span residues 1 to 72 (MELK…AAHQ), 86 to 163 (KKFS…PTQQ), 182 to 264 (MAHP…VATP), 281 to 300 (LEGT…LKGS), 398 to 418 (DGKS…KTML), and 1480 to 1505 (NLAA…SNNR). Positions 27 to 46 (ALQQGSSSSSPQNAAASLAA) are enriched in low complexity. Positions 91-103 (SAPQGQPGTTHSK) are enriched in polar residues. Residues 110–120 (LLARDDGETQH) are compositionally biased toward basic and acidic residues. The span at 407 to 418 (GSGTQSHNKTML) shows a compositional bias: polar residues. Over residues 1480 to 1502 (NLAAGSRERSTTSGQFGSTTSAS) the composition is skewed to low complexity.

This sequence belongs to the AvrE family. As to quaternary structure, interacts with the chaperone DspF (DspB/F).

It localises to the secreted. Its subcellular location is the host cell. With respect to regulation, polyamidoamine dendrimers inhibit channel and virulence activities. Functionally, major virulence factor that may function as a water- and solute-permeable channel dedicated to creating osmotic/water potential perturbation and a water- and nutrient-rich apoplast in which bacteria multiply within the infected plant tissues. Expression in Xenopus oocytes results in inward and outward currents, permeability to water and osmolarity-dependent oocyte swelling and bursting. Its function is as follows. Acts as a major cell-death inducer during fire blight, a necrotic disease affecting plants of the rosaceous family, and during hypersensitive response (HR) on non-host plants. Essential for pathogenicity on host plants. Contributes quantitatively and in a strain-dependent fashion to HR elicitation in non-host plants such as tobacco. Induces cell death in leaves of apple, a host plant, and tobacco, a non-host plant. Also triggers necrosis in the widely used model, non-host, N.benthamiana and in yeast. Required for the transient multiplication and survival of E.amylovora in non-host A.thaliana leaves. In A.thaliana, triggers electrolyte leakage, activation of defense pathways, reactive oxygen species (ROS) accumulation and cell death. The toxicity of DspE in A.thaliana is associated with an early repression of de novo protein synthesis. This Erwinia amylovora (Fire blight bacteria) protein is Type III effector DspE.